We begin with the raw amino-acid sequence, 615 residues long: 1-deoxy-D-xylulose-5-phosphate synthase (615 aa).

Thiamine diphosphate-binding positions include His72 and 111–113; that span reads GHS. Asp142 is a Mg(2+) binding site. Residues 143-144, Asn171, Tyr278, and Glu360 contribute to the thiamine diphosphate site; that span reads GA. Asn171 is a binding site for Mg(2+).

The protein belongs to the transketolase family. DXPS subfamily. As to quaternary structure, homodimer. The cofactor is Mg(2+). It depends on thiamine diphosphate as a cofactor.

It carries out the reaction D-glyceraldehyde 3-phosphate + pyruvate + H(+) = 1-deoxy-D-xylulose 5-phosphate + CO2. It functions in the pathway metabolic intermediate biosynthesis; 1-deoxy-D-xylulose 5-phosphate biosynthesis; 1-deoxy-D-xylulose 5-phosphate from D-glyceraldehyde 3-phosphate and pyruvate: step 1/1. In terms of biological role, catalyzes the acyloin condensation reaction between C atoms 2 and 3 of pyruvate and glyceraldehyde 3-phosphate to yield 1-deoxy-D-xylulose-5-phosphate (DXP). This Campylobacter jejuni subsp. jejuni serotype O:23/36 (strain 81-176) protein is 1-deoxy-D-xylulose-5-phosphate synthase.